A 189-amino-acid chain; its full sequence is Elongation factor P (189 aa).

The protein belongs to the elongation factor P family.

The protein localises to the cytoplasm. The protein operates within protein biosynthesis; polypeptide chain elongation. Its function is as follows. Involved in peptide bond synthesis. Stimulates efficient translation and peptide-bond synthesis on native or reconstituted 70S ribosomes in vitro. Probably functions indirectly by altering the affinity of the ribosome for aminoacyl-tRNA, thus increasing their reactivity as acceptors for peptidyl transferase. This is Elongation factor P from Onion yellows phytoplasma (strain OY-M).